The following is a 155-amino-acid chain: RNA pyrophosphohydrolase (155 aa).

The region spanning 6–148 (GYRANVAIVL…KQDVYRRALT (143 aa)) is the Nudix hydrolase domain. Positions 38–59 (GGVATGETPLQAMYRELYEEVG) match the Nudix box motif.

Belongs to the Nudix hydrolase family. RppH subfamily. A divalent metal cation is required as a cofactor.

Functionally, accelerates the degradation of transcripts by removing pyrophosphate from the 5'-end of triphosphorylated RNA, leading to a more labile monophosphorylated state that can stimulate subsequent ribonuclease cleavage. The chain is RNA pyrophosphohydrolase from Francisella philomiragia subsp. philomiragia (strain ATCC 25017 / CCUG 19701 / FSC 153 / O#319-036).